The following is a 247-amino-acid chain: Enolase-phosphatase E1 (247 aa).

Belongs to the HAD-like hydrolase superfamily. MasA/MtnC family. As to quaternary structure, monomer. Mg(2+) serves as cofactor.

The catalysed reaction is 5-methylsulfanyl-2,3-dioxopentyl phosphate + H2O = 1,2-dihydroxy-5-(methylsulfanyl)pent-1-en-3-one + phosphate. Its pathway is amino-acid biosynthesis; L-methionine biosynthesis via salvage pathway; L-methionine from S-methyl-5-thio-alpha-D-ribose 1-phosphate: step 3/6. It participates in amino-acid biosynthesis; L-methionine biosynthesis via salvage pathway; L-methionine from S-methyl-5-thio-alpha-D-ribose 1-phosphate: step 4/6. Functionally, bifunctional enzyme that catalyzes the enolization of 2,3-diketo-5-methylthiopentyl-1-phosphate (DK-MTP-1-P) into the intermediate 2-hydroxy-3-keto-5-methylthiopentenyl-1-phosphate (HK-MTPenyl-1-P), which is then dephosphorylated to form the acireductone 1,2-dihydroxy-3-keto-5-methylthiopentene (DHK-MTPene). The polypeptide is Enolase-phosphatase E1 (Leptospira biflexa serovar Patoc (strain Patoc 1 / Ames)).